A 60-amino-acid chain; its full sequence is Beta-defensin 11 (60 aa).

A signal peptide spans 1 to 22 (MRLHHLLLALLFLVLSAGSGIS). Cystine bridges form between Cys-27-Cys-56, Cys-34-Cys-49, and Cys-39-Cys-57.

This sequence belongs to the beta-defensin family. As to expression, neutrophilic granules.

Its subcellular location is the secreted. Has bactericidal activity. Active against E.coli ML35 and S.aureus 502A. The chain is Beta-defensin 11 (DEFB11) from Bos taurus (Bovine).